The primary structure comprises 208 residues: Glycerol-3-phosphate acyltransferase (208 aa).

Helical transmembrane passes span 3 to 23 (IIIM…VIIG), 55 to 75 (IVMV…TLLF), 81 to 101 (YTLL…YIGF), 113 to 133 (ILLA…LLLV), and 155 to 175 (IFYY…LFIF).

It belongs to the PlsY family. In terms of assembly, probably interacts with PlsX.

It localises to the cell membrane. The enzyme catalyses an acyl phosphate + sn-glycerol 3-phosphate = a 1-acyl-sn-glycero-3-phosphate + phosphate. The protein operates within lipid metabolism; phospholipid metabolism. Catalyzes the transfer of an acyl group from acyl-phosphate (acyl-PO(4)) to glycerol-3-phosphate (G3P) to form lysophosphatidic acid (LPA). This enzyme utilizes acyl-phosphate as fatty acyl donor, but not acyl-CoA or acyl-ACP. This chain is Glycerol-3-phosphate acyltransferase, found in Lactiplantibacillus plantarum (strain ATCC BAA-793 / NCIMB 8826 / WCFS1) (Lactobacillus plantarum).